Consider the following 407-residue polypeptide: RING finger protein 44 (407 aa).

Positions 26 to 58 (LSSSPGQLWGRPSNLSVEEHRASAPAGRSPRML) are disordered. The segment at 355 to 396 (CVVCFSDFEVRQLLRVLPCNHEFHAKCVDKWLKANRTCPICR) adopts an RING-type; atypical zinc-finger fold.

The sequence is that of RING finger protein 44 (Rnf44) from Mus musculus (Mouse).